Consider the following 520-residue polypeptide: Transactivator/viroplasmin protein (520 aa).

The interval 487-520 (KDASADSGPKDGPPPTRSIVEKEDVPTTSSKQVD) is disordered.

This sequence belongs to the caulimoviridae viroplasmin family.

The protein localises to the host cytoplasm. Functionally, enhances the ribosomal termination-reinitiation event leading to the translation of major open reading frames on the polycistronic viral RNAs. This Arabidopsis thaliana (Mouse-ear cress) protein is Transactivator/viroplasmin protein.